Reading from the N-terminus, the 284-residue chain is Probable endonuclease 4 (284 aa).

Zn(2+)-binding residues include H69, H109, E145, D179, H182, H216, D229, H231, and E261.

This sequence belongs to the AP endonuclease 2 family. The cofactor is Zn(2+).

It catalyses the reaction Endonucleolytic cleavage to 5'-phosphooligonucleotide end-products.. Its function is as follows. Endonuclease IV plays a role in DNA repair. It cleaves phosphodiester bonds at apurinic or apyrimidinic (AP) sites, generating a 3'-hydroxyl group and a 5'-terminal sugar phosphate. The sequence is that of Probable endonuclease 4 from Klebsiella pneumoniae (strain 342).